A 181-amino-acid chain; its full sequence is Adenylate kinase (181 aa).

Gly10 to Thr15 is a binding site for ATP. Positions Ser30 to Val59 are NMP. AMP-binding positions include Thr31, Arg36, Asp57–Val59, Gly85–Arg88, and Gln92. The segment at Gly126 to Asp132 is LID. Arg127 is a binding site for ATP. 2 residues coordinate AMP: Arg129 and Arg140. Gly166 provides a ligand contact to ATP.

It belongs to the adenylate kinase family. Monomer.

It is found in the cytoplasm. It carries out the reaction AMP + ATP = 2 ADP. Its pathway is purine metabolism; AMP biosynthesis via salvage pathway; AMP from ADP: step 1/1. Functionally, catalyzes the reversible transfer of the terminal phosphate group between ATP and AMP. Plays an important role in cellular energy homeostasis and in adenine nucleotide metabolism. The protein is Adenylate kinase of Mycobacterium ulcerans (strain Agy99).